Here is a 325-residue protein sequence, read N- to C-terminus: MAAAAATLRGAMVGPRGAGLPGARARGLLCGARPGQLPLRTPQAVSLSSKSGLSRGRKVILSALGMLAAGGAGLAVALHSAVSASDLELHPPSYPWSHRGLLSSLDHTSIRRGFQVYKQVCSSCHSMDYVAYRHLVGVCYTEDEAKALAEEVEVQDGPNEDGEMFMRPGKLSDYFPKPYPNPEAARAANNGALPPDLSYIVRARHGGEDYVFSLLTGYCEPPTGVSLREGLYFNPYFPGQAIGMAPPIYNEVLEFDDGTPATMSQVAKDVCTFLRWAAEPEHDHRKRMGLKMLLMMGLLLPLVYAMKRHKWSVLKSRKLAYRPPK.

Residues 1 to 84 (MAAAAATLRG…AVALHSAVSA (84 aa)) constitute a mitochondrion transit peptide. The Mitochondrial intermembrane portion of the chain corresponds to 85–281 (SDLELHPPSY…TFLRWAAEPE (197 aa)). The Cytochrome c domain occupies 108 to 209 (TSIRRGFQVY…IVRARHGGED (102 aa)). The heme c site is built by C121, C124, H125, and M244. Residues 282–315 (HDHRKRMGLKMLLMMGLLLPLVYAMKRHKWSVLK) form a helical membrane-spanning segment. The Mitochondrial matrix portion of the chain corresponds to 316–325 (SRKLAYRPPK).

The protein belongs to the cytochrome c family. In terms of assembly, component of the ubiquinol-cytochrome c oxidoreductase (cytochrome b-c1 complex, complex III, CIII), a multisubunit enzyme composed of 11 subunits. The complex is composed of 3 respiratory subunits cytochrome b, cytochrome c1 and Rieske protein UQCRFS1, 2 core protein subunits UQCRC1/QCR1 and UQCRC2/QCR2, and 6 low-molecular weight protein subunits UQCRH/QCR6, UQCRB/QCR7, UQCRQ/QCR8, UQCR10/QCR9, UQCR11/QCR10 and subunit 9, the cleavage product of Rieske protein UQCRFS1. The complex exists as an obligatory dimer and forms supercomplexes (SCs) in the inner mitochondrial membrane with NADH-ubiquinone oxidoreductase (complex I, CI) and cytochrome c oxidase (complex IV, CIV), resulting in different assemblies (supercomplex SCI(1)III(2)IV(1) and megacomplex MCI(2)III(2)IV(2)). Interacts with FLVCR2; this interaction occurs in the absence of heme and is disrupted upon heme binding. It depends on heme c as a cofactor.

It is found in the mitochondrion inner membrane. The enzyme catalyses a quinol + 2 Fe(III)-[cytochrome c](out) = a quinone + 2 Fe(II)-[cytochrome c](out) + 2 H(+)(out). Functionally, component of the ubiquinol-cytochrome c oxidoreductase, a multisubunit transmembrane complex that is part of the mitochondrial electron transport chain which drives oxidative phosphorylation. The respiratory chain contains 3 multisubunit complexes succinate dehydrogenase (complex II, CII), ubiquinol-cytochrome c oxidoreductase (cytochrome b-c1 complex, complex III, CIII) and cytochrome c oxidase (complex IV, CIV), that cooperate to transfer electrons derived from NADH and succinate to molecular oxygen, creating an electrochemical gradient over the inner membrane that drives transmembrane transport and the ATP synthase. The cytochrome b-c1 complex catalyzes electron transfer from ubiquinol to cytochrome c, linking this redox reaction to translocation of protons across the mitochondrial inner membrane, with protons being carried across the membrane as hydrogens on the quinol. In the process called Q cycle, 2 protons are consumed from the matrix, 4 protons are released into the intermembrane space and 2 electrons are passed to cytochrome c. Cytochrome c1 is a catalytic core subunit containing a c-type heme. It transfers electrons from the [2Fe-2S] iron-sulfur cluster of the Rieske protein to cytochrome c. The chain is Cytochrome c1, heme protein, mitochondrial (CYC1) from Bos taurus (Bovine).